A 56-amino-acid polypeptide reads, in one-letter code: Alpha-conotoxin EpI (56 aa).

Residues methionine 1 to serine 16 form the signal peptide. Positions phenylalanine 17–lysine 39 are excised as a propeptide. Disulfide bonds link cysteine 41–cysteine 47 and cysteine 42–cysteine 55. The interval serine 43–proline 45 is ser-Xaa-Pro motif, crucial for potent interaction with nAChR. Residue tyrosine 54 is modified to Sulfotyrosine. At cysteine 55 the chain carries Cysteine amide.

The protein belongs to the conotoxin A superfamily. Post-translationally, both tyrosine sulfation and C-terminal amidation are important for activity and structure stability. As to expression, expressed by the venom duct.

The protein resides in the secreted. Alpha-conotoxins act on postsynaptic membranes, they bind to the nicotinic acetylcholine receptors (nAChR) and thus inhibit them. This native peptide blocks mammalian nicotinic acetylcholine receptors composed of alpha-3-beta-2/CHRNA3-CHRNB2 and alpha-3-beta-4/CHRNA3-CHRNB4 subunits. The protein is Alpha-conotoxin EpI of Conus episcopatus (Bishop's cone).